A 347-amino-acid polypeptide reads, in one-letter code: uncharacterized protein (347 aa).

The next 10 helical transmembrane spans lie at 6–26, 37–57, 90–110, 114–134, 140–160, 182–202, 217–237, 262–282, 289–309, and 317–337; these read GSAS…GFAT, FGWF…LLGA, FMLF…GALF, LGMS…IVMT, IFGV…IVVA, WLLS…AVLV, GALI…LSLS, LIYL…NLYG, SFLP…AYIT, and LIST…GALL.

It is found in the cell membrane. This is an uncharacterized protein from Bacillus subtilis (strain 168).